The following is a 355-amino-acid chain: Ataxin-3-like protein (355 aa).

One can recognise a Josephin domain in the interval 1 to 180 (MDFIFHEKQE…DCEADQLLQI (180 aa)). The active-site Nucleophile is Cys-14. Catalysis depends on His-119, which acts as the Proton acceptor. Asn-134 is an active-site residue. 2 disordered regions span residues 209-230 (LEKV…EDFQ) and 253-331 (LSMQ…DISE). Acidic residues predominate over residues 215-228 (ESDESGTSDQDEED). UIM domains follow at residues 224–243 (QDEE…TNRE) and 244–258 (DEHL…MQGS). Polar residues predominate over residues 253–276 (LSMQGSSGNTSQDLPKTSCVTPAS). The segment covering 278–293 (QPKKIKEDYFEKHQQE) has biased composition (basic and acidic residues).

As to expression, widely expressed.

It is found in the nucleus. The catalysed reaction is Thiol-dependent hydrolysis of ester, thioester, amide, peptide and isopeptide bonds formed by the C-terminal Gly of ubiquitin (a 76-residue protein attached to proteins as an intracellular targeting signal).. In terms of biological role, deubiquitinating enzyme that cleaves both 'Lys-48'-linked and 'Lys-63'-linked poly-ubiquitin chains (in vitro). Acts as a deubiquitinating enzyme for the transcription factor KLF5, playing a role in the regulation of KLF5 stability. The protein is Ataxin-3-like protein of Homo sapiens (Human).